We begin with the raw amino-acid sequence, 90 residues long: DNA-binding protein HU-alpha (90 aa).

It belongs to the bacterial histone-like protein family. Heterodimer of an alpha and a beta chain.

Functionally, histone-like DNA-binding protein which is capable of wrapping DNA to stabilize it, and thus to prevent its denaturation under extreme environmental conditions. The chain is DNA-binding protein HU-alpha (hupA) from Serratia marcescens.